Consider the following 56-residue polypeptide: Large ribosomal subunit protein bL33 (56 aa).

Belongs to the bacterial ribosomal protein bL33 family.

In Rickettsia bellii (strain OSU 85-389), this protein is Large ribosomal subunit protein bL33.